Here is a 763-residue protein sequence, read N- to C-terminus: Ribonucleoside-diphosphate reductase subunit alpha (763 aa).

The ATP-cone domain maps to 5–95 (LFVTKRNGKK…IFHLRKKAYG (91 aa)). ATP-binding positions include K9, 15-21 (EKINLDK), T55, and K91. A GDP-binding site is contributed by T209. The cysteines at positions 225 and 462 are disulfide-linked. Residues 232–234 (DNL), R262, and R269 contribute to the dTTP site. N437 contributes to the GDP binding site. Residue N437 is the Proton acceptor of the active site. C439 (cysteine radical intermediate) is an active-site residue. Residues E441 and 623–625 (ETS) each bind GDP. Residue E441 is the Proton acceptor of the active site.

Belongs to the ribonucleoside diphosphate reductase large chain family. In terms of assembly, tetramer of two alpha and two beta subunits.

It catalyses the reaction a 2'-deoxyribonucleoside 5'-diphosphate + [thioredoxin]-disulfide + H2O = a ribonucleoside 5'-diphosphate + [thioredoxin]-dithiol. With respect to regulation, under complex allosteric control mediated by deoxynucleoside triphosphates and ATP binding to separate specificity and activation sites on the alpha subunit. The type of nucleotide bound at the specificity site determines substrate preference. It seems probable that ATP makes the enzyme reduce CDP and UDP, dGTP favors ADP reduction and dTTP favors GDP reduction. Stimulated by ATP and inhibited by dATP binding to the activity site. In terms of biological role, provides the precursors necessary for DNA synthesis. Catalyzes the biosynthesis of deoxyribonucleotides from the corresponding ribonucleotides. The sequence is that of Ribonucleoside-diphosphate reductase subunit alpha (nrdA) from Buchnera aphidicola subsp. Schizaphis graminum (strain Sg).